A 312-amino-acid chain; its full sequence is tRNA-cytidine(32) 2-sulfurtransferase (312 aa).

Residues 47-52 (SGGKDS) carry the PP-loop motif motif. [4Fe-4S] cluster is bound by residues cysteine 122, cysteine 125, and cysteine 213.

It belongs to the TtcA family. Homodimer. The cofactor is Mg(2+). Requires [4Fe-4S] cluster as cofactor.

The protein resides in the cytoplasm. The enzyme catalyses cytidine(32) in tRNA + S-sulfanyl-L-cysteinyl-[cysteine desulfurase] + AH2 + ATP = 2-thiocytidine(32) in tRNA + L-cysteinyl-[cysteine desulfurase] + A + AMP + diphosphate + H(+). Its pathway is tRNA modification. Catalyzes the ATP-dependent 2-thiolation of cytidine in position 32 of tRNA, to form 2-thiocytidine (s(2)C32). The sulfur atoms are provided by the cysteine/cysteine desulfurase (IscS) system. This is tRNA-cytidine(32) 2-sulfurtransferase from Shewanella frigidimarina (strain NCIMB 400).